A 415-amino-acid polypeptide reads, in one-letter code: Cell division control protein 11 (415 aa).

Ser2 is modified (N-acetylserine). Phosphoserine is present on Ser2. Residues 12–19 carry the Basic motif motif; it reads RKRKHLKR. The 280-residue stretch at 19 to 298 folds into the Septin-type G domain; the sequence is RGITFTVMIV…ERYRTEALSG (280 aa). Positions 29–36 are G1 motif; that stretch reads GQSGSGRS. GTP contacts are provided by residues 29-36, Gly92, 172-180, Gly230, and Arg247; these read GQSGSGRS and KSDSLTRDE. A G3 motif region spans residues 89 to 92; it reads DTPG. Residues 171–174 are G4 motif; it reads SKSD. Ser305 carries the post-translational modification Phosphoserine. Positions 307-360 are disordered; the sequence is RPNLTKLNGSSSSSTTTRRNTNPFKQSNNINNDVLNPASDMHGQSTGENNETYM. The span at 316–328 shows a compositional bias: low complexity; sequence SSSSSTTTRRNTN. Phosphothreonine is present on Thr327. 2 stretches are compositionally biased toward polar residues: residues 329 to 340 and 348 to 359; these read PFKQSNNINNDV and HGQSTGENNETY. The stretch at 354–414 forms a coiled coil; sequence ENNETYMTRE…LEKEAKIKQE (61 aa). Residue Lys412 forms a Glycyl lysine isopeptide (Lys-Gly) (interchain with G-Cter in SUMO) linkage.

Belongs to the TRAFAC class TrmE-Era-EngA-EngB-Septin-like GTPase superfamily. Septin GTPase family. In terms of assembly, component of the septin complex which consists of CDC3, CDC10, CDC11, CDC12 and probably SHS1 and rearranges to a cortical collar of highly ordered filaments at the mother-bud-neck. A complex formed by CDC3, CDC10, CDC11 and CDC12 is capable of forming long filaments in vitro and the components seem to be present in a 2:2:2:2 arrangement in vivo. The filaments are proposed to be formed by the end-to-end polymerization of CDC3-CDC12-CDC11 complexes with CDC10 serving as a bridge to bundle the polymers into paired filaments. Component of the GIN4 complex composed of at least BNI5, CDC3, CDC10, CDC11, CDC12, GIN4, NAP1 and SHS1. Self-associates. Interacts with BEM4, KCC4, SPR28 and SYP1. Interacts with BNI5. Post-translationally, sumoylated during mitosis on the mother cell side of the bud neck. Sumoylation probably plays a central role in regulating septin ring disassembly during the cell cycle.

Its subcellular location is the membrane. The protein localises to the bud neck. Functionally, septins are GTPases involved in cytokinesis that assemble early in the cell cycle as a patch at the incipient bud site and form a ring approximate 15 minutes before bud emergence, which transforms into an hour-glass shaped collar of cortical filaments that spans both sides of the mother-bud neck. This collar persists until just before cytokinesis, when it splits into two rings that occupy opposite sides of the neck. The septins at the bud neck serve as a structural scaffold that recruits different components involved in diverse processes at specific stages during the cell cycle. Many proteins bind asymmetrically to the septin collar. The septin assembly is regulated by protein kinases GIN4 and/or CLA4. May act by recruiting MYO1 and HOF1, a protein involved in septation, to the site of cleavage. Septins are also involved in cell morphogenesis, bud site selection, chitin deposition, cell cycle regulation, cell compartmentalization and spore wall formation. CDCd11 with SHS1 11 are involved in the recruitment of BNI5 and thereby ensure efficient localization at the bud neck of MYO1, the type II myosin of the actomyosin contractile ring. The polypeptide is Cell division control protein 11 (Saccharomyces cerevisiae (strain ATCC 204508 / S288c) (Baker's yeast)).